A 169-amino-acid polypeptide reads, in one-letter code: Chorion protein E1 (169 aa).

The signal sequence occupies residues 1-19; it reads MAWFTTVLIVASLLGSLVA. 2 Tetradecapeptide repeats span residues 114 to 127 and 128 to 141; these read GAGR…KPRS and GAGK…KPKS. The interval 119–169 is disordered; the sequence is AEMEGKPRSGAGKGAEMEGKPKSTESVAETNTVAAGTGVVAEKTGTESSAS. Over residues 142 to 152 the composition is skewed to polar residues; it reads TESVAETNTVA.

This protein is one of two components of the prominent 'filler' that helps mold the shape of aeropyle crowns. In Antheraea polyphemus (Polyphemus moth), this protein is Chorion protein E1.